Consider the following 219-residue polypeptide: Probable GTP-binding protein EngB (219 aa).

Positions 33–217 (GPLEIAFAGR…RAAICETVGH (185 aa)) constitute an EngB-type G domain. Residues 41–48 (GRSNVGKS), 68–72 (GRTQE), 95–98 (DMPG), 162–165 (TKTD), and 196–198 (TSS) contribute to the GTP site. Residues Ser-48 and Thr-70 each coordinate Mg(2+).

This sequence belongs to the TRAFAC class TrmE-Era-EngA-EngB-Septin-like GTPase superfamily. EngB GTPase family. The cofactor is Mg(2+).

Its function is as follows. Necessary for normal cell division and for the maintenance of normal septation. The chain is Probable GTP-binding protein EngB from Allorhizobium ampelinum (strain ATCC BAA-846 / DSM 112012 / S4) (Agrobacterium vitis (strain S4)).